Consider the following 437-residue polypeptide: MQVKRFFAADMRQAMKLVRDELGADAAIIGNRRIAGGVELTAALDYKLSALAPRVPNAELEEELRKTHTRIATAQAELDHRQDSSDNNRQLFAGQSLTAAEPLIEPHVDAPEAAAAPAPAAAPVDPRLFDAMRSELSGLRELLEVQLGSLAWSQLQGSKPQQANLWRRLQRIGLSGPIARELLDLTAEIEEPRQAWRMLLAHLARMIDIPEIEPIEEGGVIAMVGPAGMGKTTTLAKLAARYVLKYGAQNLALVSMDSFRIGAQEQLKTLGRILNVPVTYVDPGQSLAAALEPLLRKRVVLIDTAGLQASDPALRMQLETLAGRGIAAKNYLVLATTSQKQVLTAAYHSYKRCGLAGCILTKLDETASLGDVLSLAISHELPVAYLTDGPRIPDDLHLPRGHQLVSRAVNVQQQDEPSEEAMADMFADLYHNPRRAG.

GTP is bound by residues 225 to 232 (GPAGMGKT), 303 to 307 (DTAGL), and 361 to 364 (TKLD).

The protein belongs to the GTP-binding SRP family.

Its subcellular location is the cell membrane. In terms of biological role, necessary for flagellar biosynthesis. May be involved in translocation of the flagellum. In Pseudomonas putida (Arthrobacter siderocapsulatus), this protein is Flagellar biosynthesis protein FlhF (flhF).